Here is a 509-residue protein sequence, read N- to C-terminus: ATP synthase subunit alpha (509 aa).

169–176 (GDRQTGKT) provides a ligand contact to ATP.

The protein belongs to the ATPase alpha/beta chains family. As to quaternary structure, F-type ATPases have 2 components, CF(1) - the catalytic core - and CF(0) - the membrane proton channel. CF(1) has five subunits: alpha(3), beta(3), gamma(1), delta(1), epsilon(1). CF(0) has four main subunits: a(1), b(1), b'(1) and c(9-12).

Its subcellular location is the cellular chromatophore membrane. It catalyses the reaction ATP + H2O + 4 H(+)(in) = ADP + phosphate + 5 H(+)(out). Functionally, produces ATP from ADP in the presence of a proton gradient across the membrane. The alpha chain is a regulatory subunit. The sequence is that of ATP synthase subunit alpha from Rhodobacter capsulatus (Rhodopseudomonas capsulata).